A 397-amino-acid chain; its full sequence is Mitochondrial inner membrane magnesium transporter LPE10 (397 aa).

The transit peptide at 1–37 (MLLVNRAITLNLVKRCCWRSTMFMTPKRFLGTSEEES) directs the protein to the mitochondrion. A helical transmembrane segment spans residues 316-336 (LMLLGIRFSIGMLSLGGPIFI). Residues 340 to 343 (YGMN) carry the YGMN motif. A helical membrane pass occupies residues 354–374 (GFIAASAIGMISLGALYFYSI).

The protein belongs to the CorA metal ion transporter (MIT) (TC 1.A.35) family. In terms of assembly, forms homooligomers. Interacts with MRS2.

Its subcellular location is the mitochondrion inner membrane. Mitochondrial inner membrane magnesium transporter required for mitochondrial magnesium homeostasis. Modulates the conductance of the MRS2 channel. Involved in the splicing of mRNA group II introns in mitochondria by affecting mitochondrial magnesium concentrations, which are critical for group II intron splicing. The protein is Mitochondrial inner membrane magnesium transporter LPE10 (LPE10) of Candida glabrata (strain ATCC 2001 / BCRC 20586 / JCM 3761 / NBRC 0622 / NRRL Y-65 / CBS 138) (Yeast).